The primary structure comprises 128 residues: Dehydrin Xero 1 (128 aa).

Over residues 1–19 (MESYQNQSGAQQTHQQLDQ) the composition is skewed to polar residues. A disordered region spans residues 1–128 (MESYQNQSGA…IKEKLPGGHH (128 aa)). Low complexity-rich tracts occupy residues 23 to 41 (PFPATTGAYGTAGGAPAVA) and 48 to 60 (GMLHRSGSSSSSS). A compositionally biased stretch (basic and acidic residues) spans 75–91 (GITEKIKEKLPGHHDSN). Polar residues predominate over residues 92–104 (KTSSLGSTTTAYD). The span at 107–128 (TVHHEKKGMMEKIKEKLPGGHH) shows a compositional bias: basic and acidic residues.

The protein belongs to the plant dehydrin family.

The chain is Dehydrin Xero 1 (XERO1) from Arabidopsis thaliana (Mouse-ear cress).